The chain runs to 386 residues: Histidinol-phosphate aminotransferase (386 aa).

K240 bears the N6-(pyridoxal phosphate)lysine mark.

It belongs to the class-II pyridoxal-phosphate-dependent aminotransferase family. Histidinol-phosphate aminotransferase subfamily. As to quaternary structure, homodimer. Requires pyridoxal 5'-phosphate as cofactor.

The enzyme catalyses L-histidinol phosphate + 2-oxoglutarate = 3-(imidazol-4-yl)-2-oxopropyl phosphate + L-glutamate. Its pathway is amino-acid biosynthesis; L-histidine biosynthesis; L-histidine from 5-phospho-alpha-D-ribose 1-diphosphate: step 7/9. The sequence is that of Histidinol-phosphate aminotransferase from Bifidobacterium longum (strain NCC 2705).